Here is a 391-residue protein sequence, read N- to C-terminus: uncharacterized protein (391 aa).

The N-terminal stretch at 1–20 (MRKLFLLSILMIGVIVAFAG) is a signal peptide. Cys21 carries the S-archaeol cysteine lipid modification. A Fe/B12 periplasmic-binding domain is found at 104-377 (RIVTDFYCPI…DFAKMIHPEL (274 aa)).

The protein localises to the cell membrane. This is an uncharacterized protein from Methanocaldococcus jannaschii (strain ATCC 43067 / DSM 2661 / JAL-1 / JCM 10045 / NBRC 100440) (Methanococcus jannaschii).